A 770-amino-acid chain; its full sequence is Transferrin receptor protein 1 (770 aa).

The Cytoplasmic segment spans residues 1–70 (MMDQARSAFS…KPKRCNGFIC (70 aa)). Residues 1–70 (MMDQARSAFS…KPKRCNGFIC (70 aa)) form a mediates interaction with SH3BP4 region. 2 positions are modified to phosphoserine: Ser-10 and Ser-19. Tyr-20 carries the phosphotyrosine modification. The short motif at 20–23 (YTRF) is the Endocytosis signal element. Position 21 is a phosphothreonine (Thr-21). Phosphoserine is present on Ser-24. The Stop-transfer sequence signature appears at 61 to 64 (KPKR). S-palmitoyl cysteine attachment occurs at residues Cys-65 and Cys-70. Residues 71–90 (YGTIAVVLFFLIGFMIGYLG) traverse the membrane as a helical; Signal-anchor for type II membrane protein segment. At 91–770 (YCKRVEPKAG…GDIWDIDNEF (680 aa)) the chain is on the extracellular side. Residues 102–122 (ERPTGTEALGTERTEPSETEE) are disordered. An O-linked (GalNAc...) threonine glycan is attached at Thr-107. The PA domain occupies 233 to 323 (SKATTVTGRL…GTGDPYTPGF (91 aa)). 3 N-linked (GlcNAc...) asparagine glycosylation sites follow: Asn-261, Asn-327, and Asn-384. The segment at 579–770 (TMDLYENLNQ…GDIWDIDNEF (192 aa)) is ligand-binding. The short motif at 656–658 (RGD) is the Cell attachment site element. Asn-732 and Asn-737 each carry an N-linked (GlcNAc...) asparagine glycan.

The protein belongs to the peptidase M28 family. M28B subfamily. Homodimer; disulfide-linked. Binds one transferrin molecule per subunit. Interacts with SH3BP4. Interacts with STEAP3; facilitates TFRC endocytosis in erythroid precursor cells. Post-translationally, stearoylated by ZDHHC6 which inhibits TFRC-mediated activation of the JNK pathway and promotes mitochondrial fragmentation. Stearoylation does not affect iron uptake. In terms of processing, N- and O-glycosylated, phosphorylated and palmitoylated.

The protein resides in the cell membrane. Its subcellular location is the melanosome. Functionally, cellular uptake of iron occurs via receptor-mediated endocytosis of ligand-occupied transferrin receptor into specialized endosomes. Endosomal acidification leads to iron release. The apotransferrin-receptor complex is then recycled to the cell surface with a return to neutral pH and the concomitant loss of affinity of apotransferrin for its receptor. Transferrin receptor is necessary for development of erythrocytes and the nervous system. Positively regulates T and B cell proliferation through iron uptake. Acts as a lipid sensor that regulates mitochondrial fusion by regulating activation of the JNK pathway. When dietary levels of stearate (C18:0) are low, promotes activation of the JNK pathway, resulting in HUWE1-mediated ubiquitination and subsequent degradation of the mitofusin MFN2 and inhibition of mitochondrial fusion. When dietary levels of stearate (C18:0) are high, TFRC stearoylation inhibits activation of the JNK pathway and thus degradation of the mitofusin MFN2. Mediates uptake of NICOL1 into fibroblasts where it may regulate extracellular matrix production. In Canis lupus familiaris (Dog), this protein is Transferrin receptor protein 1 (TFRC).